We begin with the raw amino-acid sequence, 420 residues long: Glutamyl-tRNA reductase (420 aa).

Substrate is bound by residues 49–52, Ser109, 114–116, and Gln120; these read TCNR and EPQ. Catalysis depends on Cys50, which acts as the Nucleophile. Residue 189–194 coordinates NADP(+); the sequence is GAGETI.

The protein belongs to the glutamyl-tRNA reductase family. In terms of assembly, homodimer.

The enzyme catalyses (S)-4-amino-5-oxopentanoate + tRNA(Glu) + NADP(+) = L-glutamyl-tRNA(Glu) + NADPH + H(+). It participates in porphyrin-containing compound metabolism; protoporphyrin-IX biosynthesis; 5-aminolevulinate from L-glutamyl-tRNA(Glu): step 1/2. Catalyzes the NADPH-dependent reduction of glutamyl-tRNA(Glu) to glutamate 1-semialdehyde (GSA). The chain is Glutamyl-tRNA reductase from Proteus mirabilis (strain HI4320).